A 151-amino-acid polypeptide reads, in one-letter code: MVLYKIRRSKNDPCPSIPSAVIIGYSVGLKLITGHGAQSLSNMAGSYAGKELGIYAMNNGYEFKDIKDIERFLNQLDFAKIEMNEEEDEIIVKISKCNLCPKRICGYEFEGTACPWGGLLIGFISETLKYNLGYQMNLKPAETCIIKLKKK.

This is an uncharacterized protein from Methanocaldococcus jannaschii (strain ATCC 43067 / DSM 2661 / JAL-1 / JCM 10045 / NBRC 100440) (Methanococcus jannaschii).